The primary structure comprises 1199 residues: Tubulin-specific chaperone D (1199 aa).

Disordered regions lie at residues 1–23 (MALSEEPAAGAAEDPVEDPVEDA) and 337–361 (QHSIQNPREPVTQAETPDSDGQDDV). Acidic residues predominate over residues 14-23 (DPVEDPVEDA). HEAT repeat units follow at residues 368–406 (VIEQLLVGLKDKDTIVRWSAAKGIGRMAGRLPKELADDV), 603–639 (EHTAREVFPRLLSMTQSPDLHTRHGAVLACAEVARSL), 757–793 (AAAQEELVKLYLAELQSPEEMTRCGCALALGALPAFF), and 1111–1147 (GDVRRKVLLQLFLLLCHPFPVIRKNTASQVYEMVLTY).

It belongs to the TBCD family. Found in a complex with at least ARL2, PPP2CB, PPP2R1A, PPP2R2A, PPP2R5E and TBCD. Interacts with PPP2CB. Part of a supercomplex made of cofactors A to E. Cofactors A and D function by capturing and stabilizing tubulin in a quasi-native conformation. Cofactor E binds to the cofactor D-tubulin complex; interaction with cofactor C then causes the release of tubulin polypeptides that are committed to the native state. Interacts with ARL2; interaction is enhanced with the GDP-bound form of ARL2. Does not interact with ARL3, ARL4A and ARL4D. Interacts with beta tubulin. Interacts with TBCE.

The protein localises to the cell junction. It localises to the tight junction. It is found in the lateral cell membrane. The protein resides in the cytoplasm. Its subcellular location is the adherens junction. The protein localises to the cytoskeleton. It localises to the microtubule organizing center. It is found in the centrosome. Its function is as follows. Tubulin-folding protein implicated in the first step of the tubulin folding pathway and required for tubulin complex assembly. Involved in the regulation of microtubule polymerization or depolymerization, it modulates microtubule dynamics by capturing GTP-bound beta-tubulin (TUBB). Its ability to interact with beta tubulin is regulated via its interaction with ARL2. Acts as a GTPase-activating protein (GAP) for ARL2. Induces microtubule disruption in absence of ARL2. Increases degradation of beta tubulin, when overexpressed in polarized cells. Promotes epithelial cell detachment, a process antagonized by ARL2. Induces tight adherens and tight junctions disassembly at the lateral cell membrane. Required for correct assembly and maintenance of the mitotic spindle, and proper progression of mitosis. Involved in neuron morphogenesis. The polypeptide is Tubulin-specific chaperone D (TBCD) (Bos taurus (Bovine)).